A 215-amino-acid polypeptide reads, in one-letter code: Redox-sensing transcriptional repressor Rex (215 aa).

The segment at residues 18–57 (LYYRFLKNLHASGKQRVSSAELSDAVKVDSATIRRDFSYF) is a DNA-binding region (H-T-H motif). An NAD(+)-binding site is contributed by 92-97 (GVGNLG).

The protein belongs to the transcriptional regulatory Rex family. As to quaternary structure, homodimer.

The protein resides in the cytoplasm. In terms of biological role, modulates transcription in response to changes in cellular NADH/NAD(+) redox state. This Bacillus subtilis (strain 168) protein is Redox-sensing transcriptional repressor Rex.